We begin with the raw amino-acid sequence, 378 residues long: UDP-N-acetylglucosamine 2-epimerase (378 aa).

His-214 is a catalytic residue.

Belongs to the UDP-N-acetylglucosamine 2-epimerase family.

It carries out the reaction UDP-N-acetyl-alpha-D-glucosamine = UDP-N-acetyl-alpha-D-mannosamine. It functions in the pathway bacterial outer membrane biogenesis; LPS O-antigen biosynthesis. In Salmonella borreze, this protein is UDP-N-acetylglucosamine 2-epimerase (rfbC).